We begin with the raw amino-acid sequence, 206 residues long: N-(5'-phosphoribosyl)anthranilate isomerase (206 aa).

It belongs to the TrpF family.

The enzyme catalyses N-(5-phospho-beta-D-ribosyl)anthranilate = 1-(2-carboxyphenylamino)-1-deoxy-D-ribulose 5-phosphate. The protein operates within amino-acid biosynthesis; L-tryptophan biosynthesis; L-tryptophan from chorismate: step 3/5. This is N-(5'-phosphoribosyl)anthranilate isomerase from Pseudomonas putida (strain ATCC 700007 / DSM 6899 / JCM 31910 / BCRC 17059 / LMG 24140 / F1).